Reading from the N-terminus, the 156-residue chain is ATP synthase subunit b (156 aa).

A helical membrane pass occupies residues 3–23 (ITFTIFAQSLAFAALIWIVAT).

This sequence belongs to the ATPase B chain family. As to quaternary structure, F-type ATPases have 2 components, F(1) - the catalytic core - and F(0) - the membrane proton channel. F(1) has five subunits: alpha(3), beta(3), gamma(1), delta(1), epsilon(1). F(0) has three main subunits: a(1), b(2) and c(10-14). The alpha and beta chains form an alternating ring which encloses part of the gamma chain. F(1) is attached to F(0) by a central stalk formed by the gamma and epsilon chains, while a peripheral stalk is formed by the delta and b chains.

The protein localises to the cell inner membrane. F(1)F(0) ATP synthase produces ATP from ADP in the presence of a proton or sodium gradient. F-type ATPases consist of two structural domains, F(1) containing the extramembraneous catalytic core and F(0) containing the membrane proton channel, linked together by a central stalk and a peripheral stalk. During catalysis, ATP synthesis in the catalytic domain of F(1) is coupled via a rotary mechanism of the central stalk subunits to proton translocation. In terms of biological role, component of the F(0) channel, it forms part of the peripheral stalk, linking F(1) to F(0). The protein is ATP synthase subunit b of Xylella fastidiosa (strain 9a5c).